Reading from the N-terminus, the 434-residue chain is Enolase (434 aa).

Glutamine 168 serves as a coordination point for (2R)-2-phosphoglycerate. Residue glutamate 210 is the Proton donor of the active site. Mg(2+) contacts are provided by aspartate 247, glutamate 292, and aspartate 319. (2R)-2-phosphoglycerate-binding residues include lysine 344, arginine 373, serine 374, and lysine 395. The active-site Proton acceptor is lysine 344.

This sequence belongs to the enolase family. Mg(2+) serves as cofactor.

It localises to the cytoplasm. The protein localises to the secreted. Its subcellular location is the cell surface. The enzyme catalyses (2R)-2-phosphoglycerate = phosphoenolpyruvate + H2O. Its pathway is carbohydrate degradation; glycolysis; pyruvate from D-glyceraldehyde 3-phosphate: step 4/5. Catalyzes the reversible conversion of 2-phosphoglycerate (2-PG) into phosphoenolpyruvate (PEP). It is essential for the degradation of carbohydrates via glycolysis. The chain is Enolase from Endomicrobium trichonymphae.